We begin with the raw amino-acid sequence, 29 residues long: Dermaseptin-1 (29 aa).

At V29 the chain carries Valine amide.

As to expression, expressed by the skin glands.

The protein localises to the secreted. Functionally, antimicrobial peptide, active against the Gram-positive bacterium S.aureus, the Gram-negative bacteria E.coli and P.aeruginosa, and the yeasts C.albicans and P.brasiliensis. Has hemolytic activity (40% hemolysis at 128 ug/ml). This chain is Dermaseptin-1, found in Phyllomedusa tarsius (Brownbelly leaf frog).